Here is a 369-residue protein sequence, read N- to C-terminus: Putative agmatine deiminase (369 aa).

Catalysis depends on cysteine 355, which acts as the Amidino-cysteine intermediate.

The protein belongs to the agmatine deiminase family.

The catalysed reaction is agmatine + H2O = N-carbamoylputrescine + NH4(+). This Marinomonas sp. (strain MWYL1) protein is Putative agmatine deiminase.